A 488-amino-acid polypeptide reads, in one-letter code: MTKTERYAQLRSMIPEMRRIKRIHFVGIGGAGMGGIAEVLVNEGYQVSGSDIAQNAVTDRLCLLGAKIQIGHAAENVQQVDVVVVSTAINLENPEILAAKELRIPIVRRAEMLAELMRYRHGVAIAGTHGKTTTTSLIASVYGQAGRDPTFVIGGLLNSAGTNARLGTSRYLIAEADESDASFLHLQPMVSVVTNIEADHMDTYGGDFEKLKSTFVDFLHNLPFYGVAVVCIDDAVVREIMPRIGRQLVTYGFSDDADVQALNFSQQGHQCRFTVRRKGKADLDLVLNLPGQHNVLNALAAIAVATEDEIDDSAITQALVEFQGIGRRFQHLGKFATPKGEVMLVDDYGHHPSEVAATIKAARAGWPDKRLVMAYQPHRYTRTRDLYEDFVEVLSQVDCLLLLDVYSAGEAPITGADGRALCRSIRLRGQLDPIFIASPDQLAEVLPDVLQEGDLLLTQGAGNIGALSRLLATTELGFAVAELPAQAS.

Residue glycine 127–threonine 133 participates in ATP binding.

Belongs to the MurCDEF family.

The protein resides in the cytoplasm. The enzyme catalyses UDP-N-acetyl-alpha-D-muramate + L-alanine + ATP = UDP-N-acetyl-alpha-D-muramoyl-L-alanine + ADP + phosphate + H(+). It functions in the pathway cell wall biogenesis; peptidoglycan biosynthesis. In terms of biological role, cell wall formation. The chain is UDP-N-acetylmuramate--L-alanine ligase from Shewanella baltica (strain OS223).